A 232-amino-acid polypeptide reads, in one-letter code: tRNA pseudouridine synthase B (232 aa).

Aspartate 53 serves as the catalytic Nucleophile.

The protein belongs to the pseudouridine synthase TruB family. Type 1 subfamily.

The catalysed reaction is uridine(55) in tRNA = pseudouridine(55) in tRNA. Functionally, responsible for synthesis of pseudouridine from uracil-55 in the psi GC loop of transfer RNAs. The protein is tRNA pseudouridine synthase B of Malacoplasma penetrans (strain HF-2) (Mycoplasma penetrans).